The following is a 333-amino-acid chain: Ketol-acid reductoisomerase (NADP(+)) (333 aa).

In terms of domain architecture, KARI N-terminal Rossmann spans 1 to 179; sequence MFYDDDADLS…GGTRAGVIKT (179 aa). NADP(+) is bound by residues 22-25, Lys-45, Ser-48, Ser-50, and 80-83; these read YGSQ and DTAQ. His-105 is an active-site residue. Gly-131 serves as a coordination point for NADP(+). Positions 180–325 constitute a KARI C-terminal knotted domain; the sequence is TFKDETETDL…KKLRDLMSWV (146 aa). Positions 188, 192, 224, and 228 each coordinate Mg(2+). Ser-249 contacts substrate.

Belongs to the ketol-acid reductoisomerase family. It depends on Mg(2+) as a cofactor.

It catalyses the reaction (2R)-2,3-dihydroxy-3-methylbutanoate + NADP(+) = (2S)-2-acetolactate + NADPH + H(+). The catalysed reaction is (2R,3R)-2,3-dihydroxy-3-methylpentanoate + NADP(+) = (S)-2-ethyl-2-hydroxy-3-oxobutanoate + NADPH + H(+). It participates in amino-acid biosynthesis; L-isoleucine biosynthesis; L-isoleucine from 2-oxobutanoate: step 2/4. The protein operates within amino-acid biosynthesis; L-valine biosynthesis; L-valine from pyruvate: step 2/4. Involved in the biosynthesis of branched-chain amino acids (BCAA). Catalyzes an alkyl-migration followed by a ketol-acid reduction of (S)-2-acetolactate (S2AL) to yield (R)-2,3-dihydroxy-isovalerate. In the isomerase reaction, S2AL is rearranged via a Mg-dependent methyl migration to produce 3-hydroxy-3-methyl-2-ketobutyrate (HMKB). In the reductase reaction, this 2-ketoacid undergoes a metal-dependent reduction by NADPH to yield (R)-2,3-dihydroxy-isovalerate. The sequence is that of Ketol-acid reductoisomerase (NADP(+)) from Mycobacterium bovis (strain ATCC BAA-935 / AF2122/97).